We begin with the raw amino-acid sequence, 760 residues long: Rho GTPase-activating protein 26 (760 aa).

The region spanning 7-262 (EFSECCLDSP…MKENPHEHKN (256 aa)) is the BAR domain. Positions 265-369 (PYTMEGYLYV…WMEAMDGREP (105 aa)) constitute a PH domain. In terms of domain architecture, Rho-GAP spans 383-568 (AQLDSIGFSI…ILIENHEKIF (186 aa)). 2 disordered regions span residues 571–617 (VPET…ESRN) and 658–701 (PNRP…SPIS). Over residues 605–617 (HTAQPNEKQESRN) the composition is skewed to polar residues. A compositionally biased stretch (low complexity) spans 674–701 (LSPSWPMFSAPSSPMPTSSTSSDSSPIS). An SH3 domain is found at 702 to 760 (SPLRKARALYACKAEHDSELSFTAGTVFDNVHPSQEPGWLEGTLNGKTGLIPENYVEFL).

In terms of assembly, binds to the C-terminus of PTK2/FAK1. Detected in embryonic brain and liver, and at low levels in embryonic eye, heart, lung, intestine and skeletal muscle.

Its subcellular location is the cell junction. The protein resides in the focal adhesion. The protein localises to the cytoplasm. It is found in the cytoskeleton. It localises to the endosome membrane. Its function is as follows. GTPase-activating protein for RHOA and CDC42. May be involved in the regulation of neosynthesized protein export through a Rab-endososomal dependent export route. This is Rho GTPase-activating protein 26 (ARHGAP26) from Gallus gallus (Chicken).